A 520-amino-acid chain; its full sequence is MSNKSDVIVVGGGISGMAAAKLLHDCGLSVVVLEARDRVGGRTYTIRNKNVKYVDLGGSYVGPTQNRILRLAKELGLETYKVNEVERLIHFVKGKSYAFRGPFPPVWNPITYLDNNNLWRTMDEMGQEIPSDAPWKAPLAEEWDYMTMKELLDKICWTKSTKQIATLFVNLCVTAETHEVSALWFLWYVKQCGGTTRIISTTNGGQERKFIGGSGQVSERIKDILGDRVKLERPVIHIDQTGENVIVKTLNHEIYEAKYVISAIPPALGMKIHYSPPLPMLRNQLISRVPLGSVIKCMVYYKEPFWRKKDFCGTMVIEGEEAPIAYTLDDTKPDGTYAAIMGFILAHKARKLVRLTKEERLRKLCELYAKVLNSQEALQPVHYEEKNWCEEQYSGGCYTTYFPPGILTQYGRVLRQPVGKIFFAGTETASHWSGYMEGAVEAGERAAREILHAIGKIPEDEIWQPEPESLDVPARPITSTFLERHLPSVPGLLKLFGLTTILSATALGFLAHKRGLFVHF.

N-acetylserine is present on Ser-2. The Cytoplasmic segment spans residues 2-489 (SNKSDVIVVG…TFLERHLPSV (488 aa)). An N6-acetyllysine mark is found at Lys-52 and Lys-248. The residue at position 397 (Cys-397) is an S-8alpha-FAD cysteine. Residues 490–516 (PGLLKLFGLTTILSATALGFLAHKRGL) form a helical; Anchor for type IV membrane protein membrane-spanning segment. The Mitochondrial intermembrane portion of the chain corresponds to 517-520 (FVHF).

The protein belongs to the flavin monoamine oxidase family. As to quaternary structure, monomer, homo- or heterodimer (containing two subunits of similar size). Each subunit contains a covalently bound flavin. Enzymatically active as monomer. It depends on FAD as a cofactor.

The protein resides in the mitochondrion outer membrane. It catalyses the reaction a secondary aliphatic amine + O2 + H2O = a primary amine + an aldehyde + H2O2. The enzyme catalyses (R)-adrenaline + O2 + H2O = (R)-3,4-dihydroxymandelaldehyde + methylamine + H2O2. It carries out the reaction a primary methyl amine + O2 + H2O = an aldehyde + H2O2 + NH4(+). The catalysed reaction is benzylamine + O2 + H2O = benzaldehyde + H2O2 + NH4(+). It catalyses the reaction dopamine + O2 + H2O = 3,4-dihydroxyphenylacetaldehyde + H2O2 + NH4(+). The enzyme catalyses tyramine + O2 + H2O = (4-hydroxyphenyl)acetaldehyde + H2O2 + NH4(+). It carries out the reaction (R)-noradrenaline + O2 + H2O = (R)-3,4-dihydroxymandelaldehyde + H2O2 + NH4(+). The catalysed reaction is 2-phenylethylamine + O2 + H2O = 2-phenylacetaldehyde + H2O2 + NH4(+). It catalyses the reaction N-acetylputrescine + O2 + H2O = 4-acetamidobutanal + H2O2 + NH4(+). In terms of biological role, catalyzes the oxidative deamination of primary and some secondary amines such as neurotransmitters, and exogenous amines including the tertiary amine, neurotoxin 1-methyl-4-phenyl-1,2,3,6-tetrahydropyridine (MPTP), with concomitant reduction of oxygen to hydrogen peroxide and participates in the metabolism of neuroactive and vasoactive amines in the central nervous system and peripheral tissues. Preferentially degrades benzylamine and phenylethylamine. The polypeptide is Amine oxidase [flavin-containing] B (Mus musculus (Mouse)).